The primary structure comprises 533 residues: Calcium/calmodulin-dependent protein kinase type II (533 aa).

Residues 18–26 (LGKGAFSVV) and lysine 41 contribute to the ATP site. Catalysis depends on aspartate 134, which acts as the Proton acceptor. Threonine 284 bears the Phosphothreonine; by autocatalysis mark. Polar residues-rich tracts occupy residues 316-345 (TSDSTGSVASNGSTTHDTSQIAGTSSQPTS) and 377-391 (PPSTIKESSESSQTI). 2 disordered regions span residues 316 to 347 (TSDSTGSVASNGSTTHDTSQIAGTSSQPTSPA) and 369 to 400 (LLNKKEQGPPSTIKESSESSQTIDDNDSEKAQ).

It belongs to the protein kinase superfamily. CAMK Ser/Thr protein kinase family. CaMK subfamily. In terms of assembly, dodecamer. Subunits are tightly packed around a central ring-shaped scaffold with extensive contacts between the regulatory segment of one kinase and the catalytic domain of another enabling cooperative activation of a subunit by the adjacent molecule. Interacts with and phosphorylates daf-16; the interaction promotes daf-16 nuclear localization. Interacts with egl-2 and tir-1. Interacts with nsy-1. Mg(2+) serves as cofactor.

The protein localises to the cytoplasm. It is found in the cell projection. Its subcellular location is the axon. It localises to the perikaryon. It carries out the reaction L-seryl-[protein] + ATP = O-phospho-L-seryl-[protein] + ADP + H(+). It catalyses the reaction L-threonyl-[protein] + ATP = O-phospho-L-threonyl-[protein] + ADP + H(+). Its activity is regulated as follows. Ca(2+)/calmodulin binding removes an autoinhibitory regulatory segment located C-terminal to the kinase domain. This releases the catalytic activity of the enzyme and makes accessible a regulatory residue Thr-284. Phosphorylation of Thr-284 by another kinase domain within the oligomeric holoenzyme keeps CaMKII active in the absence of Ca(2+)/calmodulin by preventing the rebinding of the regulatory segment to the kinase domain and by increasing the affinity of calmodulin for the enzyme. Can respond to high-frequency Ca(2+) pulses to become Ca(2+) independent. In terms of biological role, role in locomotion and neuronal cell fate specification. Required for the regulation of synaptic density, egg laying, defecation, and meiotic maturation. Required for viability under chronic osmotic stress in which it acts downstream of osr-1. Regulates the synaptic trafficking of glr-1. Bidirectional modulator of neurotransmitter release with negative modulatory effects mainly mediated via slo-1 activation. May suppress the functional response to an internal pacemaker, perhaps by modulating the activity of the IP3 receptor. The sequence is that of Calcium/calmodulin-dependent protein kinase type II from Caenorhabditis briggsae.